An 866-amino-acid polypeptide reads, in one-letter code: Fibrinogen alpha chain (866 aa).

The N-terminal stretch at 1 to 19 is a signal peptide; that stretch reads MFSMRIVCLVLSVVGTAWT. At serine 22 the chain carries Phosphoserine. The tract at residues 36-38 is alpha-chain polymerization, binding distal domain of another fibrin gamma chain; sequence GPR. At serine 45 the chain carries Phosphoserine; by FAM20C. Serine 50 is modified (phosphoserine). Serine 56 is subject to Phosphoserine; by FAM20C. Positions 68–631 form a coiled coil; the sequence is CRMKGLIDEV…GHAKSRPVRD (564 aa). The segment at 262–460 is disordered; it reads ERPGGNEITR…SGSTTTTRRS (199 aa). Low complexity predominate over residues 270–299; the sequence is TRGGSTSYGTGSETESPRNPSSAGSWNSGS. Phosphoserine occurs at positions 281, 291, and 294. O-linked (GalNAc...) threonine glycosylation is present at threonine 320. Residue lysine 322 forms an Isoglutamyl lysine isopeptide (Lys-Gln) (interchain with Q-41 in alpha-2-antiplasmin) linkage. Glutamine 347 is covalently cross-linked (Isoglutamyl lysine isopeptide (Gln-Lys) (interchain with K-?)). An O-linked (GalNAc...) serine glycan is attached at serine 351. Residues 354–391 show a composition bias toward polar residues; that stretch reads PGSTGTWNPGSSERGSAGHWTSESSVSGSTGQWHSESG. Serine 364 carries the post-translational modification Phosphoserine; by FAM20C. Residue glutamine 385 forms an Isoglutamyl lysine isopeptide (Gln-Lys) (interchain with K-?) linkage. Threonine 412 is subject to Phosphothreonine. Residues 424-449 are compositionally biased toward basic and acidic residues; the sequence is TRREYHTEKLVTSKGDKELRTGKEKV. A compositionally biased stretch (low complexity) spans 450 to 460; the sequence is TSGSTTTTRRS. Serine 451 carries the phosphoserine modification. N-linked (GlcNAc...) asparagine; in variant Caracas-2 glycosylation is present at serine 453. The cysteines at positions 461 and 491 are disulfide-linked. At serine 501 the chain carries Phosphoserine. Residue threonine 505 is modified to Phosphothreonine. Position 524 is a phosphoserine; by FAM20C (serine 524). Residues lysine 527 and lysine 558 each participate in an isoglutamyl lysine isopeptide (Lys-Gln) (interchain with Q-?) cross-link. Residues 543-638 are disordered; sequence ETESRGSESG…VRDCDDVLQT (96 aa). A Phosphoserine; by FAM20C modification is found at serine 560. Proline 565 carries the 4-hydroxyproline; by P4HA1 modification. Isoglutamyl lysine isopeptide (Lys-Gln) (interchain with Q-?) cross-links involve residues lysine 575, lysine 581, and lysine 599. Residues 575–589 show a composition bias toward low complexity; it reads KSSSYSKQFTSSTSY. Positions 594 to 617 are enriched in basic and acidic residues; sequence STFESKSYKMADEAGSEADHEGTH. Phosphoserine; by FAM20C is present on serine 609. Residues 618 to 627 show a composition bias toward basic residues; it reads STKRGHAKSR. The Fibrinogen C-terminal domain occupies 623 to 864; it reads HAKSRPVRDC…AVRMKIRPLV (242 aa). Asparagine 686 is a glycosylation site (N-linked (GlcNAc...) asparagine). Positions 791, 793, 795, and 797 each coordinate Ca(2+). Cysteine 799 and cysteine 812 form a disulfide bridge.

As to quaternary structure, heterohexamer; disulfide linked. Contains 2 sets of 3 non-identical chains (alpha, beta and gamma). The 2 heterotrimers are in head to head conformation with the N-termini in a small central domain. (Microbial infection) Interacts with Staphylococcus aureus protein Fib; this interaction inhibits fibrinogen-dependent platelet aggregation and protects the bacteria form phagocytosis. In terms of processing, the alpha chain is normally not N-glycosylated, even though glycosylation at Asn-686 was observed when a fragment of the protein was expressed in insect cells. It is well known that heterologous expression of isolated domains can lead to adventitious protein modifications. Besides, glycosylation at Asn-686 is supported by large-scale glycoproteomics studies, but the evidence is still quite tenuous. Most likely, Asn-686 is not glycosylated in the healthy human body, or only with low efficiency. Post-translationally, O-glycosylated. Forms F13A-mediated cross-links between a glutamine and the epsilon-amino group of a lysine residue, forming fibronectin-fibrinogen heteropolymers. In terms of processing, about one-third of the alpha chains in the molecules in blood were found to be phosphorylated. Post-translationally, conversion of fibrinogen to fibrin is triggered by thrombin, which cleaves fibrinopeptides A and B from alpha and beta chains, and thus exposes the N-terminal polymerization sites responsible for the formation of the soft clot. The soft clot is converted into the hard clot by factor XIIIA which catalyzes the epsilon-(gamma-glutamyl)lysine cross-linking between gamma chains (stronger) and between alpha chains (weaker) of different monomers. Phosphorylated by FAM20C in the extracellular medium. In terms of tissue distribution, detected in blood plasma (at protein level).

Its subcellular location is the secreted. In terms of biological role, cleaved by the protease thrombin to yield monomers which, together with fibrinogen beta (FGB) and fibrinogen gamma (FGG), polymerize to form an insoluble fibrin matrix. Fibrin has a major function in hemostasis as one of the primary components of blood clots. In addition, functions during the early stages of wound repair to stabilize the lesion and guide cell migration during re-epithelialization. Was originally thought to be essential for platelet aggregation, based on in vitro studies using anticoagulated blood. However, subsequent studies have shown that it is not absolutely required for thrombus formation in vivo. Enhances expression of SELP in activated platelets via an ITGB3-dependent pathway. Maternal fibrinogen is essential for successful pregnancy. Fibrin deposition is also associated with infection, where it protects against IFNG-mediated hemorrhage. May also facilitate the immune response via both innate and T-cell mediated pathways. In Homo sapiens (Human), this protein is Fibrinogen alpha chain (FGA).